The sequence spans 149 residues: Altered inheritance of mitochondria protein 11 (149 aa).

2 helical membrane passes run Met29 to Thr48 and Leu79 to Trp101.

This sequence belongs to the AIM11 family.

Its subcellular location is the membrane. This is Altered inheritance of mitochondria protein 11 (AIM11) from Vanderwaltozyma polyspora (strain ATCC 22028 / DSM 70294 / BCRC 21397 / CBS 2163 / NBRC 10782 / NRRL Y-8283 / UCD 57-17) (Kluyveromyces polysporus).